Consider the following 529-residue polypeptide: Retinoic acid-induced protein 2 (529 aa).

2 disordered regions span residues methionine 1–alanine 21 and serine 400–serine 419. Over residues glycine 407 to histidine 416 the composition is skewed to polar residues.

The protein is Retinoic acid-induced protein 2 (Rai2) of Mus musculus (Mouse).